The primary structure comprises 83 residues: MFVLDDLFVNPFLSLVDILQTMALDELYDTSEIRDQIKENQLLYEIGDRPADEYERRKQELEAQLRTAEQIRDQMRDRMEIKN.

The protein belongs to the gas vesicle GvpG family. As to quaternary structure, gvpF to GvpM interact with each other in vitro, and may form multi-subunit complex(es).

It localises to the gas vesicle. Proteins GvpF to GvpM might be involved in nucleating gas vesicle formation. A minor component of the gas vesicle. Gas vesicles are hollow, gas filled proteinaceous nanostructures found in several microbial planktonic microorganisms. They allow positioning of halobacteria at the optimal depth for growth in the poorly aerated, shallow brine pools of their habitat. Its function is as follows. Expression of 2 c-vac DNA fragments containing 2 divergently transcribed regions (gvpE-gvpF-gvpG-gvpH-gvpI-gvpJ-gvpK-gvpL-gvpM and gvpA-gvpC-gvpN-gvpO) allows H.volcanii to produce gas vesicles. The chain is Gas vesicle protein G2 from Halobacterium salinarum (strain ATCC 700922 / JCM 11081 / NRC-1) (Halobacterium halobium).